The following is a 325-amino-acid chain: Eukaryotic translation initiation factor 3 subunit I (325 aa).

WD repeat units lie at residues 8 to 47 (GHERSITQIKYNREGDLLFTVAKDPIVNVWYSVNGERLGT), 50 to 91 (GHTG…ALLK), 144 to 183 (CNDSKITSAVWGPLGECIIAGHESGELNQYSAKSGEVLVN), and 186 to 225 (EHSRQINDIQLSRDMTMFVTASKDNTAKLFDSTSLEHQKT). Lys264 is modified (N6-acetyllysine). Residue Lys282 forms a Glycyl lysine isopeptide (Lys-Gly) (interchain with G-Cter in ubiquitin) linkage. Residues 283–324 (GHFGPINSVAFHPDGKSYSSGGEDGYVRIHYFDPQYFEFEFE) form a WD 5 repeat. A Phosphotyrosine modification is found at Tyr308.

Belongs to the eIF-3 subunit I family. Component of the eukaryotic translation initiation factor 3 (eIF-3) complex, which is composed of 13 subunits: EIF3A, EIF3B, EIF3C, EIF3D, EIF3E, EIF3F, EIF3G, EIF3H, EIF3I, EIF3J, EIF3K, EIF3L and EIF3M. The eIF-3 complex appears to include 3 stable modules: module A is composed of EIF3A, EIF3B, EIF3G and EIF3I; module B is composed of EIF3F, EIF3H, and EIF3M; and module C is composed of EIF3C, EIF3D, EIF3E, EIF3K and EIF3L. EIF3C of module C binds EIF3B of module A and EIF3H of module B, thereby linking the three modules. EIF3J is a labile subunit that binds to the eIF-3 complex via EIF3B. The eIF-3 complex interacts with RPS6KB1 under conditions of nutrient depletion. Mitogenic stimulation leads to binding and activation of a complex composed of MTOR and RPTOR, leading to phosphorylation and release of RPS6KB1 and binding of EIF4B to eIF-3. Post-translationally, phosphorylated by TGF-beta type II receptor.

It is found in the cytoplasm. Component of the eukaryotic translation initiation factor 3 (eIF-3) complex, which is required for several steps in the initiation of protein synthesis. The eIF-3 complex associates with the 40S ribosome and facilitates the recruitment of eIF-1, eIF-1A, eIF-2:GTP:methionyl-tRNAi and eIF-5 to form the 43S pre-initiation complex (43S PIC). The eIF-3 complex stimulates mRNA recruitment to the 43S PIC and scanning of the mRNA for AUG recognition. The eIF-3 complex is also required for disassembly and recycling of post-termination ribosomal complexes and subsequently prevents premature joining of the 40S and 60S ribosomal subunits prior to initiation. The eIF-3 complex specifically targets and initiates translation of a subset of mRNAs involved in cell proliferation, including cell cycling, differentiation and apoptosis, and uses different modes of RNA stem-loop binding to exert either translational activation or repression. In Rattus norvegicus (Rat), this protein is Eukaryotic translation initiation factor 3 subunit I (Eif3i).